Consider the following 320-residue polypeptide: Cytochrome f (320 aa).

A signal peptide spans 1 to 35 (MQTRNAFSWLKKQITRSISVSLMIYILTRTSISSA). Heme is bound by residues Tyr36, Cys56, Cys59, and His60. A helical membrane pass occupies residues 286–306 (VQGLLFFLASVILAQIFLVLK).

The protein belongs to the cytochrome f family. As to quaternary structure, the 4 large subunits of the cytochrome b6-f complex are cytochrome b6, subunit IV (17 kDa polypeptide, petD), cytochrome f and the Rieske protein, while the 4 small subunits are PetG, PetL, PetM and PetN. The complex functions as a dimer. Heme is required as a cofactor.

The protein localises to the plastid. It is found in the chloroplast thylakoid membrane. Functionally, component of the cytochrome b6-f complex, which mediates electron transfer between photosystem II (PSII) and photosystem I (PSI), cyclic electron flow around PSI, and state transitions. In Nicotiana sylvestris (Wood tobacco), this protein is Cytochrome f.